The chain runs to 233 residues: Probable 2-phosphosulfolactate phosphatase (233 aa).

The protein belongs to the ComB family. Mg(2+) is required as a cofactor.

It carries out the reaction (2R)-O-phospho-3-sulfolactate + H2O = (2R)-3-sulfolactate + phosphate. The sequence is that of Probable 2-phosphosulfolactate phosphatase from Clostridium tetani (strain Massachusetts / E88).